The chain runs to 135 residues: Large ribosomal subunit protein uL22c (135 aa).

The protein belongs to the universal ribosomal protein uL22 family. In terms of assembly, part of the 50S ribosomal subunit.

It is found in the plastid. Functionally, this protein binds specifically to 23S rRNA. Its function is as follows. The globular domain of the protein is located near the polypeptide exit tunnel on the outside of the subunit, while an extended beta-hairpin is found that lines the wall of the exit tunnel in the center of the 70S ribosome. In Cuscuta exaltata (Tall dodder), this protein is Large ribosomal subunit protein uL22c (rpl22).